The primary structure comprises 343 residues: Probable beta-1,3-galactosyltransferase 13 (343 aa).

Residues 22-42 form a helical; Signal-anchor for type II membrane protein membrane-spanning segment; sequence LIVFTSLAIGLTGFLFGLSTI. N-linked (GlcNAc...) asparagine glycosylation occurs at N265.

The protein belongs to the glycosyltransferase 31 family. Mn(2+) is required as a cofactor.

It is found in the golgi apparatus membrane. Its pathway is protein modification; protein glycosylation. In terms of biological role, beta-1,3-galactosyltransferase that transfers galactose from UDP-galactose to substrates with a terminal glycosyl residue. The chain is Probable beta-1,3-galactosyltransferase 13 (B3GALT13) from Arabidopsis thaliana (Mouse-ear cress).